The primary structure comprises 177 residues: ATP synthase subunit delta (177 aa).

This sequence belongs to the ATPase delta chain family. F-type ATPases have 2 components, F(1) - the catalytic core - and F(0) - the membrane proton channel. F(1) has five subunits: alpha(3), beta(3), gamma(1), delta(1), epsilon(1). F(0) has three main subunits: a(1), b(2) and c(10-14). The alpha and beta chains form an alternating ring which encloses part of the gamma chain. F(1) is attached to F(0) by a central stalk formed by the gamma and epsilon chains, while a peripheral stalk is formed by the delta and b chains.

The protein resides in the cell inner membrane. In terms of biological role, f(1)F(0) ATP synthase produces ATP from ADP in the presence of a proton or sodium gradient. F-type ATPases consist of two structural domains, F(1) containing the extramembraneous catalytic core and F(0) containing the membrane proton channel, linked together by a central stalk and a peripheral stalk. During catalysis, ATP synthesis in the catalytic domain of F(1) is coupled via a rotary mechanism of the central stalk subunits to proton translocation. Functionally, this protein is part of the stalk that links CF(0) to CF(1). It either transmits conformational changes from CF(0) to CF(1) or is implicated in proton conduction. This is ATP synthase subunit delta from Haemophilus ducreyi (strain 35000HP / ATCC 700724).